A 483-amino-acid polypeptide reads, in one-letter code: Zinc finger CCCH domain-containing protein 25 (483 aa).

The segment at 157 to 184 (RNRAHICSFFIRGECTRGDECPYRHEMP) adopts a C3H1-type zinc-finger fold. The region spanning 228 to 301 (RTLYVGGLNS…QRLKLTWGRP (74 aa)) is the RRM domain. Disordered stretches follow at residues 298-317 (WGRP…QGSV) and 336-483 (PPML…GSSQ). The segment covering 336–351 (PPMLQYYMHPPPPQPP) has biased composition (pro residues). Positions 370–380 (SSSKESGSSTS) are enriched in low complexity. Polar residues predominate over residues 381–391 (DNRGASSSSYT). 2 stretches are compositionally biased toward low complexity: residues 392 to 401 (MPPHGHYPQH) and 409 to 423 (YGGY…YPPY). A compositionally biased stretch (pro residues) spans 438-459 (QPGPGSRPNPPHPSSVSAPPPD). Residues 460–476 (SVSAAPSGSSQQSADAA) are compositionally biased toward low complexity.

This chain is Zinc finger CCCH domain-containing protein 25, found in Arabidopsis thaliana (Mouse-ear cress).